The following is a 595-amino-acid chain: Torsin-1A-interacting protein 1 (595 aa).

The segment at 1-221 (MAGERWQAEG…GNTKTNEREA (221 aa)) is disordered. At 1–351 (MAGERWQAEG…NEPSVKIKWW (351 aa)) the chain is on the nuclear side. The span at 24–38 (PIREGRRRLDPRNGD) shows a compositional bias: basic and acidic residues. Ser-60 carries the post-translational modification Phosphoserine. 2 stretches are compositionally biased toward basic and acidic residues: residues 70-101 (FEPRAAKERSPGGRRTPPEKFRPASAGEEVRE) and 115-132 (RAQEAEEMKTRRSARLEQ). A compositionally biased stretch (polar residues) spans 133–143 (HSQQPQLSPAT). Ser-134, Ser-140, Ser-151, Ser-153, Ser-154, and Ser-155 each carry phosphoserine. A compositionally biased stretch (polar residues) spans 204 to 215 (LDSTYQTNGNTK). Thr-235 is modified (phosphothreonine). Phosphoserine is present on residues Ser-241, Ser-244, and Ser-255. Disordered stretches follow at residues 250–286 (ARSSDSLESRDEATPAAGNHPDSLRGLPHNQDFPAHE) and 319–340 (IQKSNFGNQSPSTSRPQSAIHH). Basic and acidic residues predominate over residues 251–262 (RSSDSLESRDEA). The segment covering 319–335 (IQKSNFGNQSPSTSRPQ) has biased composition (polar residues). Lys-321 participates in a covalent cross-link: Glycyl lysine isopeptide (Lys-Gly) (interchain with G-Cter in SUMO2). Position 328 is a phosphoserine (Ser-328). The helical transmembrane segment at 352–372 (LLGLVAILAVGLFWFFHTPAV) threads the bilayer. An interaction with TOR1A region spans residues 368–595 (HTPAVETTAV…ENTLKAGSCL (228 aa)). A coiled-coil region spans residues 373 to 400 (ETTAVQEFQNQMKQLQSKYQSQNEKLWK). Residues 373-595 (ETTAVQEFQN…ENTLKAGSCL (223 aa)) lie on the Perinuclear space side of the membrane. A glycan (N-linked (GlcNAc...) asparagine) is linked at Asn-411.

It belongs to the TOR1AIP family. As to quaternary structure, interacts with ATP1B4. Interacts with TOR1A (ATP-bound). Interacts with TOR1B, TOR2A and TOR3A. Interacts with VIM. As to expression, expressed in the spinal cord and liver (at protein level).

It is found in the nucleus inner membrane. Its function is as follows. Required for nuclear membrane integrity. Induces TOR1A and TOR1B ATPase activity and is required for their location on the nuclear membrane. Binds to A- and B-type lamins. Possible role in membrane attachment and assembly of the nuclear lamina. In Mus musculus (Mouse), this protein is Torsin-1A-interacting protein 1 (Tor1aip1).